The primary structure comprises 338 residues: Fructose-1,6-bisphosphatase class 1 (338 aa).

Residues glutamate 94, aspartate 116, leucine 118, and aspartate 119 each coordinate Mg(2+). Residues 119–122, asparagine 210, and lysine 276 each bind substrate; that span reads DGSS. Glutamate 282 serves as a coordination point for Mg(2+).

This sequence belongs to the FBPase class 1 family. In terms of assembly, homotetramer. Mg(2+) is required as a cofactor.

The protein resides in the cytoplasm. The catalysed reaction is beta-D-fructose 1,6-bisphosphate + H2O = beta-D-fructose 6-phosphate + phosphate. It functions in the pathway carbohydrate biosynthesis; gluconeogenesis. This chain is Fructose-1,6-bisphosphatase class 1, found in Burkholderia thailandensis (strain ATCC 700388 / DSM 13276 / CCUG 48851 / CIP 106301 / E264).